Consider the following 844-residue polypeptide: 3',5'-cyclic-AMP phosphodiesterase 4A (844 aa).

A disordered region spans residues 1-124 (MEPPAAPSER…RSPLDSQASP (124 aa)). At Ser-13 the chain carries Phosphoserine. Positions 36–46 (QPRTPIRIQQR) are enriched in low complexity. Over residues 51 to 78 (SAERSETERSPHRPIERADAVDTGDRPG) the composition is skewed to basic and acidic residues. Residues 82–91 (TRMSWPSSFH) are compositionally biased toward polar residues. The residue at position 147 (Ser-147) is a Phosphoserine; by MAPKAPK2. 3 positions are modified to phosphoserine: Ser-152, Ser-160, and Ser-204. Positions 296-317 (PSPTPRQRAFQQPPPSVLRQSQ) are disordered. A Phosphoserine modification is found at Ser-333. Positions 343–672 (VKTDQEDLLA…DWYHSAIRQS (330 aa)) constitute a PDEase domain. A Glycyl lysine isopeptide (Lys-Gly) (interchain with G-Cter in SUMO) cross-link involves residue Lys-344. Residue His-419 is the Proton donor of the active site. A 3',5'-cyclic AMP-binding site is contributed by His-419. AMP contacts are provided by His-419 and His-423. Residues His-423, His-459, Asp-460, and Asp-577 each coordinate Zn(2+). AMP is bound by residues Asp-460, Asp-577, Gln-628, and Phe-631. Asp-460 provides a ligand contact to Mg(2+). Asp-460 serves as a coordination point for Mn(2+). Positions 628 and 631 each coordinate 3',5'-cyclic AMP. Disordered stretches follow at residues 668-690 (AIRQ…PSLP) and 818-844 (SACS…GDPA). Residues Ser-672 and Ser-674 each carry the phosphoserine modification. Residues 820 to 830 (CSGTSGDNSAI) are compositionally biased toward polar residues.

The protein belongs to the cyclic nucleotide phosphodiesterase family. PDE4 subfamily. As to quaternary structure, interacts with LYN (via SH3 domain). Interacts with ARRB2. It depends on Zn(2+) as a cofactor. Mg(2+) is required as a cofactor. Requires Mn(2+) as cofactor. In terms of processing, phosphorylated by MAPKAPK2 at Ser-147; it counteracts PKA-induced activation of PDE4A and modulates intracellular cAMP levels. Likely involved in cellular desensitization to cAMP signaling. Proteolytically cleaved by CASP3. In terms of tissue distribution, isoform 2 is testis specific.

The protein localises to the cytoplasm. Its subcellular location is the cytosol. It is found in the membrane. The enzyme catalyses 3',5'-cyclic AMP + H2O = AMP + H(+). The protein operates within purine metabolism; 3',5'-cyclic AMP degradation; AMP from 3',5'-cyclic AMP: step 1/1. Its activity is regulated as follows. Inhibited by rolipram. Functionally, hydrolyzes the second messenger 3',5'-cyclic AMP (cAMP), which is a key regulator of many important physiological processes. In terms of biological role, efficiently hydrolyzes cAMP. In Rattus norvegicus (Rat), this protein is 3',5'-cyclic-AMP phosphodiesterase 4A (Pde4a).